Reading from the N-terminus, the 151-residue chain is MATSGTYVTEVPLKGSAEKHYKRWRSENHLFPDAIGHHIQGVTIHDGEWDSHGAIKIWNYTCDGKPEVFKERREIDDENMAVTFRGLEGHVMEQLKVYDVIFQFIQKSPDDIICKITMIWEKQNDDMPEPSNYMKFVKSLAADMDDHVLKA.

Belongs to the MLP family.

This chain is MLP-like protein 328 (MLP328), found in Arabidopsis thaliana (Mouse-ear cress).